Consider the following 325-residue polypeptide: Geranylgeranyl transferase type-2 subunit beta (325 aa).

PFTB repeat units follow at residues 9 to 50 (KEKH…CVLD), 57 to 99 (KEEV…ATYD), 109 to 150 (KVRL…SILG), 157 to 198 (VDPA…AIAN), 208 to 249 (LEEI…AIIG), and 256 to 298 (YEKL…SLMG). Geranylgeranyl diphosphate is bound by residues 183 to 185 (HAA) and 228 to 240 (RPSK…YSWW). Zn(2+) is bound by residues Asp-234, Cys-236, and His-286.

This sequence belongs to the protein prenyltransferase subunit beta family. As to quaternary structure, heterodimer of an alpha and a beta subunit. Requires Zn(2+) as cofactor.

It carries out the reaction geranylgeranyl diphosphate + L-cysteinyl-[protein] = S-geranylgeranyl-L-cysteinyl-[protein] + diphosphate. Functionally, catalyzes the transfer of a geranyl-geranyl moiety from geranyl-geranyl pyrophosphate to proteins having the C-terminal -XCC or -XCXC, where both cysteines may become modified. Acts on YPT1 and SEC4. The polypeptide is Geranylgeranyl transferase type-2 subunit beta (BET2) (Saccharomyces cerevisiae (strain ATCC 204508 / S288c) (Baker's yeast)).